Reading from the N-terminus, the 93-residue chain is Cobalt transport protein CbiN (93 aa).

A run of 2 helical transmembrane segments spans residues 5-25 (LILL…NHGG) and 63-83 (LLFT…LGYA).

This sequence belongs to the CbiN family. As to quaternary structure, forms an energy-coupling factor (ECF) transporter complex composed of an ATP-binding protein (A component, CbiO), a transmembrane protein (T component, CbiQ) and 2 possible substrate-capture proteins (S components, CbiM and CbiN) of unknown stoichimetry.

The protein localises to the cell inner membrane. The protein operates within cofactor biosynthesis; adenosylcobalamin biosynthesis. In terms of biological role, part of the energy-coupling factor (ECF) transporter complex CbiMNOQ involved in cobalt import. This Klebsiella pneumoniae subsp. pneumoniae (strain ATCC 700721 / MGH 78578) protein is Cobalt transport protein CbiN.